The following is a 556-amino-acid chain: F-box protein YDR131C (556 aa).

In terms of domain architecture, F-box spans 1-44; the sequence is MFDKLPYEIFKQIAWRIPQEDKISLTYVCKRSYESIIPFIYQNL.

In terms of assembly, interacts with SKP1. Component of the probable SCF(YDR131C) complex containing CDC53, SKP1, RBX1 and YDR131C.

It is found in the vacuole. It functions in the pathway protein modification; protein ubiquitination. In terms of biological role, substrate recognition component of a SCF (SKP1-CUL1-F-box protein) E3 ubiquitin-protein ligase complex which mediates the ubiquitination and subsequent proteasomal degradation of target proteins. Probably recognizes and binds to phosphorylated target proteins. The protein is F-box protein YDR131C of Saccharomyces cerevisiae (strain ATCC 204508 / S288c) (Baker's yeast).